The chain runs to 322 residues: Acetyl-coenzyme A carboxylase carboxyl transferase subunit alpha (322 aa).

One can recognise a CoA carboxyltransferase C-terminal domain in the interval 30–293 (ALDISAEITR…RQALQESLRK (264 aa)).

It belongs to the AccA family. Acetyl-CoA carboxylase is a heterohexamer composed of biotin carboxyl carrier protein (AccB), biotin carboxylase (AccC) and two subunits each of ACCase subunit alpha (AccA) and ACCase subunit beta (AccD).

The protein localises to the cytoplasm. The catalysed reaction is N(6)-carboxybiotinyl-L-lysyl-[protein] + acetyl-CoA = N(6)-biotinyl-L-lysyl-[protein] + malonyl-CoA. Its pathway is lipid metabolism; malonyl-CoA biosynthesis; malonyl-CoA from acetyl-CoA: step 1/1. In terms of biological role, component of the acetyl coenzyme A carboxylase (ACC) complex. First, biotin carboxylase catalyzes the carboxylation of biotin on its carrier protein (BCCP) and then the CO(2) group is transferred by the carboxyltransferase to acetyl-CoA to form malonyl-CoA. In Nitrosomonas eutropha (strain DSM 101675 / C91 / Nm57), this protein is Acetyl-coenzyme A carboxylase carboxyl transferase subunit alpha.